The chain runs to 65 residues: Photosystem II reaction center protein J (65 aa).

Residues 35–55 form a helical membrane-spanning segment; the sequence is LWLVATAGGTAVIFVLGIFFY.

The protein belongs to the PsbJ family. PSII is composed of 1 copy each of membrane proteins PsbA, PsbB, PsbC, PsbD, PsbE, PsbF, PsbH, PsbI, PsbJ, PsbK, PsbL, PsbM, PsbT, PsbX, PsbY, Psb30/Ycf12, peripheral proteins PsbO, CyanoQ (PsbQ), PsbU, PsbV and a large number of cofactors. It forms dimeric complexes.

The protein resides in the cellular thylakoid membrane. Functionally, one of the components of the core complex of photosystem II (PSII). PSII is a light-driven water:plastoquinone oxidoreductase that uses light energy to abstract electrons from H(2)O, generating O(2) and a proton gradient subsequently used for ATP formation. It consists of a core antenna complex that captures photons, and an electron transfer chain that converts photonic excitation into a charge separation. The protein is Photosystem II reaction center protein J of Prochlorococcus marinus (strain NATL2A).